The sequence spans 745 residues: Protein PHOX1 (745 aa).

Residues 1–10 (MGKPTGKKKN) show a composition bias toward basic residues. The interval 1–37 (MGKPTGKKKNNNYTEMPPTESSTTGGGKTGKSFDRSA) is disordered. TPR repeat units follow at residues 52 to 85 (ALEL…LPRD), 90 to 125 (AYLR…SPRF), and 126 to 159 (SKAL…EPEN). The 80-residue stretch at 280–359 (TRTVKLVHGD…GSFRLYIAEV (80 aa)) folds into the PB1 domain. 4 TPR repeats span residues 406 to 441 (EHWI…YTEA), 443 to 472 (EDIV…AMFN), 494 to 528 (ETIL…KSDF), and 553 to 586 (GEVD…WEEM).

In terms of assembly, interacts with myosin XI-1 and XI-K.

Its subcellular location is the cytoplasmic vesicle membrane. Functionally, carboxylate clamp type tetratricopeptide repeat protein that may act as a potential Hsp90/Hsp70 co-chaperone. Contributes to polar growth of root hairs. This Arabidopsis thaliana (Mouse-ear cress) protein is Protein PHOX1.